The following is a 1287-amino-acid chain: DNA-directed RNA polymerase 147 kDa polypeptide (1287 aa).

This sequence belongs to the poxviridae DNA-directed RNA polymerase 147 kDa subunit family. In terms of assembly, the DNA-dependent RNA polymerase used for intermediate and late genes expression consists of eight subunits Rpo30/OPG66, Rpo7/OPG90, Rpo22/OPG103, Rpo147/OPG105, Rpo18/OPG119, Rpo19/OPG131, Rpo132/OPG151 and Rpo35/OPG156. The same holoenzyme, with the addition of the transcription-specificity factor OPG109, is used for early gene expression.

The protein localises to the virion. The catalysed reaction is RNA(n) + a ribonucleoside 5'-triphosphate = RNA(n+1) + diphosphate. Functionally, part of the DNA-dependent RNA polymerase which catalyzes the transcription of viral DNA into RNA using the four ribonucleoside triphosphates as substrates. Responsible for the transcription of early, intermediate and late genes. DNA-dependent RNA polymerase associates with the early transcription factor (ETF), itself composed of OPG118 and OPG133, thereby allowing the early genes transcription. Late transcription, and probably also intermediate transcription, require newly synthesized RNA polymerase. The chain is DNA-directed RNA polymerase 147 kDa polypeptide (OPG105) from Bos taurus (Bovine).